The following is a 556-amino-acid chain: 2-succinyl-5-enolpyruvyl-6-hydroxy-3-cyclohexene-1-carboxylate synthase (556 aa).

The protein belongs to the TPP enzyme family. MenD subfamily. As to quaternary structure, homodimer. The cofactor is Mg(2+). Mn(2+) is required as a cofactor. It depends on thiamine diphosphate as a cofactor.

The catalysed reaction is isochorismate + 2-oxoglutarate + H(+) = 5-enolpyruvoyl-6-hydroxy-2-succinyl-cyclohex-3-ene-1-carboxylate + CO2. It participates in quinol/quinone metabolism; 1,4-dihydroxy-2-naphthoate biosynthesis; 1,4-dihydroxy-2-naphthoate from chorismate: step 2/7. Its pathway is quinol/quinone metabolism; menaquinone biosynthesis. Catalyzes the thiamine diphosphate-dependent decarboxylation of 2-oxoglutarate and the subsequent addition of the resulting succinic semialdehyde-thiamine pyrophosphate anion to isochorismate to yield 2-succinyl-5-enolpyruvyl-6-hydroxy-3-cyclohexene-1-carboxylate (SEPHCHC). This is 2-succinyl-5-enolpyruvyl-6-hydroxy-3-cyclohexene-1-carboxylate synthase from Salmonella typhi.